The chain runs to 243 residues: tRNA (guanine-N(1)-)-methyltransferase (243 aa).

Residues Gly-112 and 131–136 (LGDYVL) each bind S-adenosyl-L-methionine.

The protein belongs to the RNA methyltransferase TrmD family. Homodimer.

The protein localises to the cytoplasm. It catalyses the reaction guanosine(37) in tRNA + S-adenosyl-L-methionine = N(1)-methylguanosine(37) in tRNA + S-adenosyl-L-homocysteine + H(+). Its function is as follows. Specifically methylates guanosine-37 in various tRNAs. This chain is tRNA (guanine-N(1)-)-methyltransferase, found in Leuconostoc mesenteroides subsp. mesenteroides (strain ATCC 8293 / DSM 20343 / BCRC 11652 / CCM 1803 / JCM 6124 / NCDO 523 / NBRC 100496 / NCIMB 8023 / NCTC 12954 / NRRL B-1118 / 37Y).